The following is a 318-amino-acid chain: Pantothenate kinase (318 aa).

An ATP-binding site is contributed by 96-103; that stretch reads GSVAVGKS.

The protein belongs to the prokaryotic pantothenate kinase family.

It is found in the cytoplasm. It catalyses the reaction (R)-pantothenate + ATP = (R)-4'-phosphopantothenate + ADP + H(+). It participates in cofactor biosynthesis; coenzyme A biosynthesis; CoA from (R)-pantothenate: step 1/5. This Rhodopseudomonas palustris (strain HaA2) protein is Pantothenate kinase.